We begin with the raw amino-acid sequence, 108 residues long: Transcriptional activator HlyU (108 aa).

Residues 13–107 (EMEKNSAKAV…LLHRLYCQAN (95 aa)) form the HTH arsR-type domain. The segment at residues 47 to 66 (VGELSSRLELSQSALSQHLA) is a DNA-binding region (H-T-H motif).

In terms of biological role, up-regulates the expression of the hemolysin gene, hlyA, and may promote expression of other virulence determinants in vivo. It may have both positive and negative regulator activities. The sequence is that of Transcriptional activator HlyU (hlyU) from Vibrio cholerae serotype O1 (strain ATCC 39315 / El Tor Inaba N16961).